The sequence spans 451 residues: Type 3 secretion system ATPase (451 aa).

184 to 189 lines the ATP pocket; sequence GGGKST.

This sequence belongs to the ATPase alpha/beta chains family. T3SS ATPase subfamily. As to quaternary structure, the core secretion machinery of the T3SS is composed of approximately 20 different proteins, including cytoplasmic components, a base, an export apparatus and a needle. This subunit is part of the cytosolic complex. Forms homohexamers.

The protein localises to the cytoplasm. The catalysed reaction is ATP + H2O + cellular proteinSide 1 = ADP + phosphate + cellular proteinSide 2.. Functionally, ATPase component of the type III secretion system (T3SS), also called injectisome, which is used to inject bacterial effector proteins into eukaryotic host cells. Acts as a molecular motor to provide the energy that is required for the export of proteins. Required for type III secretion apparatus (T3SA) formation, proper protein secretion, host cell invasion and virulence. May play a critical role in T3SS substrate recognition, disassembly of the effector/chaperone complex and unfolding of the effector in an ATP-dependent manner prior to secretion. In Sinorhizobium fredii (strain NBRC 101917 / NGR234), this protein is Type 3 secretion system ATPase.